The following is a 752-amino-acid chain: Catalase-peroxidase 1 (752 aa).

Residues 1–45 are disordered; that stretch reads MPPNTPDASDARPPQADTETHSHSESENPVIESPKPKAHAPLTNQ. Residues 116-244 constitute a cross-link (tryptophyl-tyrosyl-methioninium (Trp-Tyr) (with M-270)); the sequence is WHAAGTYRIF…YGATTMGLIY (129 aa). The active-site Proton acceptor is the His117. A cross-link (tryptophyl-tyrosyl-methioninium (Tyr-Met) (with W-116)) is located at residues 244–270; it reads YVNPEGPEGKPDPLAAAHDIRETFGRM. His285 contacts heme b.

Belongs to the peroxidase family. Peroxidase/catalase subfamily. Homodimer or homotetramer. The cofactor is heme b. In terms of processing, formation of the three residue Trp-Tyr-Met cross-link is important for the catalase, but not the peroxidase activity of the enzyme.

It carries out the reaction H2O2 + AH2 = A + 2 H2O. The catalysed reaction is 2 H2O2 = O2 + 2 H2O. In terms of biological role, bifunctional enzyme with both catalase and broad-spectrum peroxidase activity. May play a role in the intracellular survival of mycobacteria. This is Catalase-peroxidase 1 from Mycolicibacterium fortuitum (Mycobacterium fortuitum).